The chain runs to 122 residues: Small ribosomal subunit protein uS13 (122 aa).

The disordered stretch occupies residues Val98–Lys122. The segment covering Gln101–Lys122 has biased composition (basic residues).

It belongs to the universal ribosomal protein uS13 family. As to quaternary structure, part of the 30S ribosomal subunit. Forms a loose heterodimer with protein S19. Forms two bridges to the 50S subunit in the 70S ribosome.

Functionally, located at the top of the head of the 30S subunit, it contacts several helices of the 16S rRNA. In the 70S ribosome it contacts the 23S rRNA (bridge B1a) and protein L5 of the 50S subunit (bridge B1b), connecting the 2 subunits; these bridges are implicated in subunit movement. Contacts the tRNAs in the A and P-sites. In Thermosipho africanus (strain TCF52B), this protein is Small ribosomal subunit protein uS13.